The primary structure comprises 693 residues: Phenoloxidase subunit 2 (693 aa).

Residues Met1–Arg51 constitute a propeptide that is removed on maturation. 2 N-linked (GlcNAc...) asparagine glycosylation sites follow: Asn26 and Asn64. Positions 213, 217, and 243 each coordinate Cu cation. The active-site Proton acceptor is the Glu351. Cu cation contacts are provided by His366, His370, and His406. 2 N-linked (GlcNAc...) asparagine glycosylation sites follow: Asn462 and Asn494. 2 disulfide bridges follow: Cys583-Cys627 and Cys585-Cys634. N-linked (GlcNAc...) asparagine glycosylation is present at Asn680.

In terms of assembly, heterodimer. The cofactor is Cu(2+). In terms of processing, the N-terminus is blocked. Synthesized by hemocytes and released into the hemolymph plasma.

It is found in the secreted. It catalyses the reaction 2 L-dopa + O2 = 2 L-dopaquinone + 2 H2O. The catalysed reaction is L-tyrosine + O2 = L-dopaquinone + H2O. Functionally, this is a copper-containing oxidase that functions in the formation of pigments such as melanins and other polyphenolic compounds. Catalyzes the rate-limiting conversions of tyrosine to DOPA, DOPA to DOPA-quinone and possibly 5,6 dihydroxyindole to indole-5'6 quinone. This is Phenoloxidase subunit 2 from Bombyx mori (Silk moth).